We begin with the raw amino-acid sequence, 569 residues long: Protein germ cell-less (569 aa).

Residues 17–43 (SNRRKRKRSTDSSLGKDDPAQLDTTQP) form a disordered region. Residues 66-136 (SDVAVMALDK…MYSDEIEIES (71 aa)) enclose the BTB domain. The segment at 517 to 553 (GANSDRPLSPSSADDSAVFIGDSEPSTPSSPAPRPRI) is disordered.

Its subcellular location is the cytoplasm. Its function is as follows. Required for the specification of pole cells and germ cell formation. Mothers with reduced glc function give rise to sterile adult progeny that lack germ cells. In Drosophila melanogaster (Fruit fly), this protein is Protein germ cell-less (gcl).